Here is a 245-residue protein sequence, read N- to C-terminus: tRNA1(Val) (adenine(37)-N6)-methyltransferase (245 aa).

Belongs to the methyltransferase superfamily. tRNA (adenine-N(6)-)-methyltransferase family.

It is found in the cytoplasm. The catalysed reaction is adenosine(37) in tRNA1(Val) + S-adenosyl-L-methionine = N(6)-methyladenosine(37) in tRNA1(Val) + S-adenosyl-L-homocysteine + H(+). Functionally, specifically methylates the adenine in position 37 of tRNA(1)(Val) (anticodon cmo5UAC). This chain is tRNA1(Val) (adenine(37)-N6)-methyltransferase, found in Cronobacter sakazakii (strain ATCC BAA-894) (Enterobacter sakazakii).